The following is a 352-amino-acid chain: C-C chemokine receptor type 5 (352 aa).

At 1 to 30 (MDYQVSSPTYDIDYYTSEPCQKIKVKQIAA) the chain is on the extracellular side. A Sulfotyrosine modification is found at Tyr3. 2 O-linked (GalNAc...) serine glycosylation sites follow: Ser6 and Ser7. A sulfotyrosine mark is found at Tyr10, Tyr14, and Tyr15. 2 cysteine pairs are disulfide-bonded: Cys20–Cys269 and Cys101–Cys178. Residues 31–58 (RLLPPLYSLVFIFGFVGNILVVLILINC) traverse the membrane as a helical segment. The Cytoplasmic portion of the chain corresponds to 59-68 (KRLKSMTDIY). A helical membrane pass occupies residues 69–89 (LLNLAISDLLFLLTVPFWAHY). Residues 90–102 (AAAQWDFGNTMCQ) are Extracellular-facing. The helical transmembrane segment at 103–124 (LLTGLYFIGFFSGIFFIILLTI) threads the bilayer. At 125 to 141 (DRYLAIVHAVFALKART) the chain is on the cytoplasmic side. A helical transmembrane segment spans residues 142–166 (VTFGVVTSVITWVVAVFASLPRIIF). The Extracellular portion of the chain corresponds to 167 to 198 (TRSQREGLHYTCSSHFPYSQYQFWKNFQTLKI). A helical membrane pass occupies residues 199–218 (VILGLVLPLLVMVICYSGIL). The Cytoplasmic segment spans residues 219 to 235 (KTLLRCRNDKKRHRAVR). The helical transmembrane segment at 236-260 (LIFTIMIVYFLFWAPYNIVLLLNTF) threads the bilayer. The Extracellular segment spans residues 261–277 (QEFFGLNNCSSSNRLDQ). Residues 278-301 (AMQVTETLGMTHCCINPIIYAFVG) traverse the membrane as a helical segment. Residues 302–352 (EKFRNYLLVFFQKHIAKRFCKCCSIFQQDAPERASSVYTRSTGEQETSVGL) are Cytoplasmic-facing. S-palmitoyl cysteine attachment occurs at residues Cys321, Cys323, and Cys324. Ser336, Ser337, Ser342, and Ser349 each carry phosphoserine; by BARK1.

The protein belongs to the G-protein coupled receptor 1 family. Interacts with PRAF2. Efficient ligand binding to CCL3/MIP-1alpha and CCL4/MIP-1beta requires sulfation, O-glycosylation and sialic acid modifications. Glycosylation on Ser-6 is required for efficient binding of CCL4. Interacts with GRK2. Interacts with ARRB1 and ARRB2. Interacts with CNIH4. Interacts with S100A4; this interaction stimulates T-lymphocyte chemotaxis. Post-translationally, sulfated on at least 2 of the N-terminal tyrosines. Sulfation is required for efficient binding of the chemokines, CCL3 and CCL4. In terms of processing, palmitoylation in the C-terminal is important for cell surface expression. Phosphorylation on serine residues in the C-terminal is stimulated by binding CC chemokines especially by APO-RANTES. Post-translationally, O-glycosylated, but not N-glycosylated. Ser-6 appears to be the major site even if Ser-7 may be also O-glycosylated. Also sialylated glycans present which contribute to chemokine binding. Thr-16 and Ser-17 may also be glycosylated and, if so, with small moieties such as a T-antigen.

The protein resides in the cell membrane. Its function is as follows. Receptor for a number of inflammatory CC-chemokines including CCL3/MIP-1-alpha, CCL4/MIP-1-beta and RANTES and subsequently transduces a signal by increasing the intracellular calcium ion level. May play a role in the control of granulocytic lineage proliferation or differentiation. Participates in T-lymphocyte migration to the infection site by acting as a chemotactic receptor. The polypeptide is C-C chemokine receptor type 5 (CCR5) (Chlorocebus sabaeus (Green monkey)).